The following is a 239-amino-acid chain: Putative CRISPR-associated endoribonuclease-like protein Cas6nc (239 aa).

The protein belongs to the CRISPR-associated protein Cas6/Cse3/CasE family. As to quaternary structure, monomer; homodimer when crystallized in the presence of crRNA. Varying the crRNA sequence varies degree of oligomerization and structure.

Its function is as follows. CRISPR (clustered regularly interspaced short palindromic repeat), is an adaptive immune system that provides protection against mobile genetic elements (viruses, transposable elements and conjugative plasmids). CRISPR clusters contain sequences complementary to antecedent mobile elements and target invading nucleic acids. CRISPR clusters are transcribed and processed into CRISPR RNA (crRNA), also called psiRNA (prokaryotic silencing) in this organism (Potential). The polypeptide is Putative CRISPR-associated endoribonuclease-like protein Cas6nc (cas6nc) (Pyrococcus horikoshii (strain ATCC 700860 / DSM 12428 / JCM 9974 / NBRC 100139 / OT-3)).